We begin with the raw amino-acid sequence, 501 residues long: Cytoplasmic tRNA 2-thiolation protein 2 (501 aa).

Residues 1 to 12 (MCEMSEEYRESA) show a composition bias toward basic and acidic residues. Disordered stretches follow at residues 1–23 (MCEMSEEYRESAPKGPPPPRLGT) and 192–214 (GVERQSQHCAQDPQSPTGPPTTA). The residue at position 2 (cysteine 2) is an N-acetylcysteine. Serine 492 carries the phosphoserine modification.

It belongs to the CTU2/NCS2 family. In terms of assembly, component of a complex at least composed of URM1, CTU2/NCS2 and CTU1/ATPBD3.

The protein localises to the cytoplasm. It functions in the pathway tRNA modification; 5-methoxycarbonylmethyl-2-thiouridine-tRNA biosynthesis. Plays a central role in 2-thiolation of mcm(5)S(2)U at tRNA wobble positions of tRNA(Lys), tRNA(Glu) and tRNA(Gln). May act by forming a heterodimer with CTU1/ATPBD3 that ligates sulfur from thiocarboxylated URM1 onto the uridine of tRNAs at wobble position. The sequence is that of Cytoplasmic tRNA 2-thiolation protein 2 from Bos taurus (Bovine).